Consider the following 327-residue polypeptide: Aspartate--ammonia ligase (327 aa).

This sequence belongs to the class-II aminoacyl-tRNA synthetase family. AsnA subfamily.

The protein resides in the cytoplasm. The enzyme catalyses L-aspartate + NH4(+) + ATP = L-asparagine + AMP + diphosphate + H(+). It functions in the pathway amino-acid biosynthesis; L-asparagine biosynthesis; L-asparagine from L-aspartate (ammonia route): step 1/1. This chain is Aspartate--ammonia ligase, found in Mycoplasmoides gallisepticum (strain R(low / passage 15 / clone 2)) (Mycoplasma gallisepticum).